The following is a 236-amino-acid chain: 7-cyano-7-deazaguanine synthase (236 aa).

7 to 17 is a binding site for ATP; that stretch reads CSGGLDSVSLA. Zn(2+) contacts are provided by Cys-185, Cys-193, Cys-196, and Cys-199.

Belongs to the QueC family. The cofactor is Zn(2+).

The enzyme catalyses 7-carboxy-7-deazaguanine + NH4(+) + ATP = 7-cyano-7-deazaguanine + ADP + phosphate + H2O + H(+). It functions in the pathway purine metabolism; 7-cyano-7-deazaguanine biosynthesis. Catalyzes the ATP-dependent conversion of 7-carboxy-7-deazaguanine (CDG) to 7-cyano-7-deazaguanine (preQ(0)). The polypeptide is 7-cyano-7-deazaguanine synthase (Agrobacterium fabrum (strain C58 / ATCC 33970) (Agrobacterium tumefaciens (strain C58))).